The sequence spans 179 residues: Large ribosomal subunit protein uL5c (179 aa).

Belongs to the universal ribosomal protein uL5 family. As to quaternary structure, part of the 50S ribosomal subunit; contacts the 5S rRNA.

The protein resides in the plastid. Its subcellular location is the organellar chromatophore. In terms of biological role, binds 5S rRNA, forms part of the central protuberance of the 50S subunit. This is Large ribosomal subunit protein uL5c (rpl5) from Paulinella chromatophora.